The sequence spans 215 residues: Glutathione S-transferase-like protein (215 aa).

The GST N-terminal domain maps to 1–76; that stretch reads MPNARILKIQ…YVAASGPAAP (76 aa). Residues 82–215 enclose the GST C-terminal domain; that stretch reads NVAEQAAVRQ…LVAVRKEASV (134 aa).

It belongs to the GST superfamily.

This is Glutathione S-transferase-like protein from Aspergillus aculeatus (strain ATCC 16872 / CBS 172.66 / WB 5094).